The chain runs to 206 residues: Guanylate kinase (206 aa).

One can recognise a Guanylate kinase-like domain in the interval 6–184 (GILFILSGPS…AVDKVKTIIK (179 aa)). 13–20 (GPSGVGKG) contacts ATP.

The protein belongs to the guanylate kinase family.

It is found in the cytoplasm. It catalyses the reaction GMP + ATP = GDP + ADP. In terms of biological role, essential for recycling GMP and indirectly, cGMP. In Oceanobacillus iheyensis (strain DSM 14371 / CIP 107618 / JCM 11309 / KCTC 3954 / HTE831), this protein is Guanylate kinase.